A 750-amino-acid polypeptide reads, in one-letter code: MTISPPEQEASVKIVVDRDPVKTSFERWAKPGHFSRTLAKGPNTTTWIWNLHADAHDFDSHTNDLEDISRKVFSAHFGQLAVIFIWLSGMYFHGARFSNYEAWLSDPTHIKPSAQVVWPIVGQEILNGDVGGGFQGIQITSGFFQLWRASGITSELQLYSTAIGGLVMAGLMLFAGWFHYHKAAPKLEWFQNVESMLNHHLAGLLGLGSLSWAGHQIHVSLPINKLLDAGVDPKEIPLPHEFLVNRDLTAQLFPSFAKGLTPFFTLNWAEYSDFLTFKGGLNPVTGGLWLTDTAHHHLAIAVLFLVAGHMYRTNWGIGHSIKEILEAHKGPFTGAGHRGLYEILTTSWHAQLAINLALFGSLSIIVAHHMYAMPPYPYLATDYGTQLSIFTHHTWIGGFCIVGGAAHAAIFMVRDYDPTNNYNNLLDRVIRHRDAIISHLNWVCIFLGFHSFGLYIHNDTMSALGRPQDMFSDTAIQLQPVFAQWIQNTHYLAPNLTAPNALAPTSATWGGDVVAVGGKVAMMPISLGTADFLVHHIHAFTIHVTVLILLKGVLFARSSRLIPDKVNLGFRFPCDGPGRGGTCQVSAWDHVFLGLFWMYNSLSIAIFHFSWKMQSDVWGSVTAKGVSHITGGNFAQSSITINGWLRDFLWAQASQVIQSYGSALSAYGLMFLGAHFVWAFSLMFLFSGRGYWQELIESIVWAHNKLKVAPAIQPRALSIIQGRAVGVAHYLLGGIATTWAFFLARIIAVG.

A run of 8 helical transmembrane segments spans residues 72–95, 158–181, 197–221, 293–311, 348–371, 387–413, 435–457, and 532–550; these read VFSAHFGQLAVIFIWLSGMYFHGA, LYSTAIGGLVMAGLMLFAGWFHYH, LNHHLAGLLGLGSLSWAGHQIHVSL, TAHHHLAIAVLFLVAGHMY, WHAQLAINLALFGSLSIIVAHHMY, LSIFTHHTWIGGFCIVGGAAHAAIFMV, AIISHLNWVCIFLGFHSFGLYIH, and FLVHHIHAFTIHVTVLILL. [4Fe-4S] cluster is bound by residues C574 and C583. Transmembrane regions (helical) follow at residues 590 to 611 and 664 to 686; these read HVFLGLFWMYNSLSIAIFHFSW and LSAYGLMFLGAHFVWAFSLMFLF. Residue H675 coordinates chlorophyll a'. Residues M683 and Y691 each contribute to the chlorophyll a site. W692 serves as a coordination point for phylloquinone. Residues 724-744 form a helical membrane-spanning segment; the sequence is AVGVAHYLLGGIATTWAFFLA.

This sequence belongs to the PsaA/PsaB family. As to quaternary structure, the PsaA/B heterodimer binds the P700 chlorophyll special pair and subsequent electron acceptors. PSI consists of a core antenna complex that captures photons, and an electron transfer chain that converts photonic excitation into a charge separation. The eukaryotic PSI reaction center is composed of at least 11 subunits. It depends on P700 is a chlorophyll a/chlorophyll a' dimer, A0 is one or more chlorophyll a, A1 is one or both phylloquinones and FX is a shared 4Fe-4S iron-sulfur center. as a cofactor.

The protein localises to the plastid. It is found in the chloroplast thylakoid membrane. The enzyme catalyses reduced [plastocyanin] + hnu + oxidized [2Fe-2S]-[ferredoxin] = oxidized [plastocyanin] + reduced [2Fe-2S]-[ferredoxin]. Functionally, psaA and PsaB bind P700, the primary electron donor of photosystem I (PSI), as well as the electron acceptors A0, A1 and FX. PSI is a plastocyanin-ferredoxin oxidoreductase, converting photonic excitation into a charge separation, which transfers an electron from the donor P700 chlorophyll pair to the spectroscopically characterized acceptors A0, A1, FX, FA and FB in turn. Oxidized P700 is reduced on the lumenal side of the thylakoid membrane by plastocyanin. In Chlorokybus atmophyticus (Soil alga), this protein is Photosystem I P700 chlorophyll a apoprotein A1.